The chain runs to 277 residues: MQQDSHTHGIDMSALGRNKQSLRMAEETVAIEVPGLSLFYGDKQALFDVQMNIPKQRVTAFIGPSGCGKSTLLRTFNRMNDLVDGCRVEGAINLYGNNIYRKGEDVAELRRRVGMVFQKPNPFPKTIYENVVYGLRIQGINKKRVLDEAVEWALKGAALWDEVKDRLHESALGLSGGQQQRLVIARTIAVEPEVLLLDEPCSALDPISTLKVEELIYELKSKYTIVIVTHNMQQAARVSDYTAFMYMGKLVEFGDTDTLFTNPAKKQTEDYITGRYG.

The ABC transporter domain occupies 31 to 272; it reads IEVPGLSLFY…PAKKQTEDYI (242 aa). 63–70 lines the ATP pocket; the sequence is GPSGCGKS.

Belongs to the ABC transporter superfamily. Phosphate importer (TC 3.A.1.7) family. In terms of assembly, the complex is composed of two ATP-binding proteins (PstB), two transmembrane proteins (PstC and PstA) and a solute-binding protein (PstS).

It is found in the cell inner membrane. The enzyme catalyses phosphate(out) + ATP + H2O = ADP + 2 phosphate(in) + H(+). Functionally, part of the ABC transporter complex PstSACB involved in phosphate import. Responsible for energy coupling to the transport system. This is Phosphate import ATP-binding protein PstB 2 from Pseudomonas putida (strain ATCC 47054 / DSM 6125 / CFBP 8728 / NCIMB 11950 / KT2440).